The following is a 301-amino-acid chain: F-actin-capping protein subunit beta (301 aa).

Ser-31 is subject to Phosphoserine. Residue Lys-264 is modified to N6-acetyllysine.

This sequence belongs to the F-actin-capping protein beta subunit family. In terms of assembly, component of the F-actin capping complex, composed of a heterodimer of an alpha and a beta subunit. Subunit of dynactin, a multiprotein complex part of a tripartite complex with dynein and a adapter, such as BICDL1, BICD2 or HOOK3. The dynactin complex is built around ACTR1A/ACTB filament and consists of an actin-related filament composed of a shoulder domain, a pointed end and a barbed end. Its length is defined by its flexible shoulder domain. The soulder is composed of 2 DCTN1 subunits, 4 DCTN2 and 2 DCTN3. The 4 DCNT2 (via N-terminus) bind the ACTR1A filament and act as molecular rulers to determine the length. The pointed end is important for binding dynein-dynactin cargo adapters. Consists of 4 subunits: ACTR10, DCNT4, DCTN5 and DCTN6. The barbed end is composed of a CAPZA1:CAPZB heterodimers, which binds ACTR1A/ACTB filament and dynactin and stabilizes dynactin. Interacts with ARHGAP17. Interaction with RCSD1/CAPZIP. Component of the WASH complex, composed of F-actin-capping protein subunit alpha (CAPZA1, CAPZA2 or CAPZA3), F-actin-capping protein subunit beta (CAPZB), WASH (WASHC1, WASH2P, WASH3P, WASH4P, WASH5P or WASH6P), WASHC2 (WASHC2A or WASHC2C), WASHC3, WASHC4 and WASHC5. Interacts with ACTG1. Directly interacts with CRACD; this interaction decreases binding to actin. The isoform beta-3 is predominantly expressed in the testis. It is only detected in total sperm, sperm heads and the calyx fraction, but not in sperm tails or any supernatant fraction. Weaker expression also found in brain.

The protein localises to the cytoplasm. It is found in the cytoskeleton. The protein resides in the perinuclear theca. Its subcellular location is the calyx. Functionally, F-actin-capping proteins bind in a Ca(2+)-independent manner to the fast growing ends of actin filaments (barbed end) thereby blocking the exchange of subunits at these ends. Unlike other capping proteins (such as gelsolin and severin), these proteins do not sever actin filaments. Plays a role in the regulation of cell morphology and cytoskeletal organization. Forms, with CAPZB, the barbed end of the fast growing ends of actin filaments in the dynactin complex and stabilizes dynactin structure. The dynactin multiprotein complex activates the molecular motor dynein for ultra-processive transport along microtubules. The protein is F-actin-capping protein subunit beta (CAPZB) of Bos taurus (Bovine).